An 843-amino-acid polypeptide reads, in one-letter code: Beta-mannosidase B (843 aa).

Glu-430 serves as the catalytic Proton donor. An N-linked (GlcNAc...) asparagine glycan is attached at Asn-721.

This sequence belongs to the glycosyl hydrolase 2 family. Beta-mannosidase B subfamily.

It catalyses the reaction Hydrolysis of terminal, non-reducing beta-D-mannose residues in beta-D-mannosides.. It functions in the pathway glycan metabolism; N-glycan degradation. In terms of biological role, exoglycosidase that cleaves the single beta-linked mannose residue from the non-reducing end of beta-mannosidic oligosaccharides of various complexity and length. Prefers mannobiose over mannotriose and has no activity against polymeric mannan. Is also severely restricted by galactosyl substitutions at the +1 subsite. The polypeptide is Beta-mannosidase B (mndB) (Aspergillus terreus (strain NIH 2624 / FGSC A1156)).